We begin with the raw amino-acid sequence, 93 residues long: Small ribosomal subunit protein bS16 (93 aa).

Belongs to the bacterial ribosomal protein bS16 family.

This Dictyoglomus turgidum (strain DSM 6724 / Z-1310) protein is Small ribosomal subunit protein bS16.